The following is a 37-amino-acid chain: Small ribosomal subunit protein eS32 (37 aa).

It belongs to the eukaryotic ribosomal protein eS32 family. As to quaternary structure, part of the small ribosomal subunit.

Interacts with N(4)-acetylcytidine (ac(4)C) 1459 of the small rRNA; the acetyl group of ac(4)C1459 briges the interaction with this protein. The polypeptide is Small ribosomal subunit protein eS32 (rpl41e) (Thermococcus kodakarensis (strain ATCC BAA-918 / JCM 12380 / KOD1) (Pyrococcus kodakaraensis (strain KOD1))).